The following is a 135-amino-acid chain: Large ribosomal subunit protein uL16c (135 aa).

It belongs to the universal ribosomal protein uL16 family. In terms of assembly, part of the 50S ribosomal subunit.

It is found in the plastid. The protein resides in the chloroplast. The protein is Large ribosomal subunit protein uL16c of Jasminum nudiflorum (Winter jasmine).